Consider the following 583-residue polypeptide: Proline--tRNA ligase (583 aa).

This sequence belongs to the class-II aminoacyl-tRNA synthetase family. ProS type 1 subfamily. Homodimer.

It localises to the cytoplasm. The catalysed reaction is tRNA(Pro) + L-proline + ATP = L-prolyl-tRNA(Pro) + AMP + diphosphate. Functionally, catalyzes the attachment of proline to tRNA(Pro) in a two-step reaction: proline is first activated by ATP to form Pro-AMP and then transferred to the acceptor end of tRNA(Pro). As ProRS can inadvertently accommodate and process non-cognate amino acids such as alanine and cysteine, to avoid such errors it has two additional distinct editing activities against alanine. One activity is designated as 'pretransfer' editing and involves the tRNA(Pro)-independent hydrolysis of activated Ala-AMP. The other activity is designated 'posttransfer' editing and involves deacylation of mischarged Ala-tRNA(Pro). The misacylated Cys-tRNA(Pro) is not edited by ProRS. The polypeptide is Proline--tRNA ligase (Methylococcus capsulatus (strain ATCC 33009 / NCIMB 11132 / Bath)).